The primary structure comprises 731 residues: DNA ligase (731 aa).

NAD(+) is bound by residues 59 to 63, 108 to 109, and glutamate 142; these read DSEYD and SL. Lysine 144 acts as the N6-AMP-lysine intermediate in catalysis. NAD(+) is bound by residues arginine 165, glutamate 202, lysine 318, and lysine 342. Cysteine 434, cysteine 437, cysteine 452, and cysteine 458 together coordinate Zn(2+). The region spanning 645 to 731 is the BRCT domain; sequence LASSPLSGKI…ENDGQDSIKI (87 aa).

Belongs to the NAD-dependent DNA ligase family. LigA subfamily. The cofactor is Mg(2+). Mn(2+) is required as a cofactor.

The enzyme catalyses NAD(+) + (deoxyribonucleotide)n-3'-hydroxyl + 5'-phospho-(deoxyribonucleotide)m = (deoxyribonucleotide)n+m + AMP + beta-nicotinamide D-nucleotide.. Its function is as follows. DNA ligase that catalyzes the formation of phosphodiester linkages between 5'-phosphoryl and 3'-hydroxyl groups in double-stranded DNA using NAD as a coenzyme and as the energy source for the reaction. It is essential for DNA replication and repair of damaged DNA. The chain is DNA ligase from Zymomonas mobilis subsp. mobilis (strain ATCC 31821 / ZM4 / CP4).